Reading from the N-terminus, the 888-residue chain is Alanine--tRNA ligase (888 aa).

Residues histidine 573, histidine 577, cysteine 676, and histidine 680 each coordinate Zn(2+).

This sequence belongs to the class-II aminoacyl-tRNA synthetase family. The cofactor is Zn(2+).

The protein resides in the cytoplasm. The enzyme catalyses tRNA(Ala) + L-alanine + ATP = L-alanyl-tRNA(Ala) + AMP + diphosphate. In terms of biological role, catalyzes the attachment of alanine to tRNA(Ala) in a two-step reaction: alanine is first activated by ATP to form Ala-AMP and then transferred to the acceptor end of tRNA(Ala). Also edits incorrectly charged Ser-tRNA(Ala) and Gly-tRNA(Ala) via its editing domain. The chain is Alanine--tRNA ligase from Corynebacterium glutamicum (strain R).